The following is a 221-amino-acid chain: Prolactin-3B1 (221 aa).

An N-terminal signal peptide occupies residues 1-30; it reads MQLPLTPLSFSGTLLLMAMSNFLLWEHVTS. Intrachain disulfides connect C81–C196 and C213–C221.

This sequence belongs to the somatotropin/prolactin family.

It localises to the secreted. In Mesocricetus auratus (Golden hamster), this protein is Prolactin-3B1 (PRL3B1).